The following is a 264-amino-acid chain: ATP synthase subunit b 1 (264 aa).

A helical membrane pass occupies residues 2-22; that stretch reads LFDWFTFWAQLLNFLILVWLL. Residues 240-264 are disordered; the sequence is ASSALLDGPDDEMNEEEGHAGKDAD. Positions 255–264 are enriched in basic and acidic residues; that stretch reads EEGHAGKDAD.

Belongs to the ATPase B chain family. F-type ATPases have 2 components, F(1) - the catalytic core - and F(0) - the membrane proton channel. F(1) has five subunits: alpha(3), beta(3), gamma(1), delta(1), epsilon(1). F(0) has four main subunits: a(1), b(2) and c(10-14). The alpha and beta chains form an alternating ring which encloses part of the gamma chain. F(1) is attached to F(0) by a central stalk formed by the gamma and epsilon chains, while a peripheral stalk is formed by the delta and b chains.

The protein resides in the cell inner membrane. Functionally, f(1)F(0) ATP synthase produces ATP from ADP in the presence of a proton or sodium gradient. F-type ATPases consist of two structural domains, F(1) containing the extramembraneous catalytic core and F(0) containing the membrane proton channel, linked together by a central stalk and a peripheral stalk. During catalysis, ATP synthesis in the catalytic domain of F(1) is coupled via a rotary mechanism of the central stalk subunits to proton translocation. Its function is as follows. Component of the F(0) channel, it forms part of the peripheral stalk, linking F(1) to F(0). This Chlorobium luteolum (strain DSM 273 / BCRC 81028 / 2530) (Pelodictyon luteolum) protein is ATP synthase subunit b 1.